The chain runs to 214 residues: U3 small nucleolar RNA-associated protein 16 (214 aa).

The segment covering 1–10 (MSNGHVKFDA) has biased composition (basic and acidic residues). The interval 1–106 (MSNGHVKFDA…KSVNETEVTD (106 aa)) is disordered. Serine 16 bears the Phosphoserine mark. The span at 22-41 (DRQDDVLVISKKDKEVHSSS) shows a compositional bias: basic and acidic residues. A compositionally biased stretch (acidic residues) spans 42–52 (DEESDDDDAPQ). Phosphoserine is present on residues serine 45, serine 65, and serine 144. Positions 54 to 75 (EGLHSGKSEVESQITQREEAIR) are enriched in basic and acidic residues. Residues 182–214 (STTQDSKTLPPKKESSIIRSKDRWLNRKALNKG) are disordered. The span at 192-206 (PKKESSIIRSKDRWL) shows a compositional bias: basic and acidic residues.

This sequence belongs to the UTP16 family. Part of the small subunit (SSU) processome composed of at least 40 protein subunits and the RNA chaperone small nucleolar RNA (snoRNA) U3. Interacts with snoRNA U3. Interacts with MPP10.

The protein resides in the nucleus. It is found in the nucleolus. Its function is as follows. Functions as part of the small subunit (SSU) processome, first precursor of the small eukaryotic ribosomal subunit that coordinates the first two steps of ribosome biogenesis in transcription of the primary transcript pre-RNA and pre-18S processing. During the assembly of the SSU processome in the nucleolus, many ribosome biogenesis factors, an RNA chaperone and ribosomal proteins associate with the nascent pre-rRNA and work in concert to generate RNA folding, modifications, rearrangements and cleavage as well as targeted degradation of pre-ribosomal RNA by the RNA exosome. Has a role in bud site selection maybe via the regulation of expression of bipolar budding components. This is U3 small nucleolar RNA-associated protein 16 (BUD21) from Saccharomyces cerevisiae (strain ATCC 204508 / S288c) (Baker's yeast).